The chain runs to 257 residues: Tryptophan synthase alpha chain (257 aa).

Residues E47 and D58 each act as proton acceptor in the active site.

This sequence belongs to the TrpA family. As to quaternary structure, tetramer of two alpha and two beta chains.

The catalysed reaction is (1S,2R)-1-C-(indol-3-yl)glycerol 3-phosphate + L-serine = D-glyceraldehyde 3-phosphate + L-tryptophan + H2O. The protein operates within amino-acid biosynthesis; L-tryptophan biosynthesis; L-tryptophan from chorismate: step 5/5. Functionally, the alpha subunit is responsible for the aldol cleavage of indoleglycerol phosphate to indole and glyceraldehyde 3-phosphate. The protein is Tryptophan synthase alpha chain of Listeria innocua serovar 6a (strain ATCC BAA-680 / CLIP 11262).